We begin with the raw amino-acid sequence, 204 residues long: 8-oxoguanine DNA glycosylase/AP lyase (204 aa).

Catalysis depends on residues lysine 129 and aspartate 147.

Belongs to the type-2 OGG1 family.

It carries out the reaction 2'-deoxyribonucleotide-(2'-deoxyribose 5'-phosphate)-2'-deoxyribonucleotide-DNA = a 3'-end 2'-deoxyribonucleotide-(2,3-dehydro-2,3-deoxyribose 5'-phosphate)-DNA + a 5'-end 5'-phospho-2'-deoxyribonucleoside-DNA + H(+). Functionally, catalyzes the excision of an oxidatively damaged form of guanine (7,8-dihydro-8-oxoguanine = 8-oxoG) from DNA. Also cleaves the DNA backbone at apurinic/apyrimidinic sites (AP sites). This Thermoplasma acidophilum (strain ATCC 25905 / DSM 1728 / JCM 9062 / NBRC 15155 / AMRC-C165) protein is 8-oxoguanine DNA glycosylase/AP lyase.